A 488-amino-acid polypeptide reads, in one-letter code: MDYLNEDLQSVHDKLVAGDLTASQLVTDTLETIKTKEQQVDAFLTIDEKGAQEAAAKIDAQPIDADNLLAGMPIGIKDNLLTDGVTTTAASKMLANFKPVFDATVVEKLKAKKAIMIGKTNLDEFAMGSSTETSAFKKTKNPWDLDKVPGGSSGGSAAAVAAGEVVAALGTDTGGSIRQPAAFNGIVGIKPTYGRVSRWGAIAFASSLDQVGVFSRTVADNATVLQAISGHDEKDSTSADYEVPDFRAALNGDIKGMKIAVAKEYMAEGVEPAVKAQIETAIETFKSLGATVEEVSLPHSQYAVQTYYIIASSEASSNLSRFDGIRYGYRSPEAKTLEDVYVKSRSEGFGDEVKRRIMLGTFALSSGFYDAYFKKAGQMRTLIIQDFEKVFEDYDLVVGPTTPTTAFKLGDKGTDPVTMYMNDILTIPANMAGLPAMSVPAGLVDGMPVGLQIIGKAFDEESVYRAGYAFEQATEFNKNVPSFKGGQA.

Active-site charge relay system residues include Lys-77 and Ser-152. The Acyl-ester intermediate role is filled by Ser-176.

Belongs to the amidase family. GatA subfamily. In terms of assembly, heterotrimer of A, B and C subunits.

The catalysed reaction is L-glutamyl-tRNA(Gln) + L-glutamine + ATP + H2O = L-glutaminyl-tRNA(Gln) + L-glutamate + ADP + phosphate + H(+). Functionally, allows the formation of correctly charged Gln-tRNA(Gln) through the transamidation of misacylated Glu-tRNA(Gln) in organisms which lack glutaminyl-tRNA synthetase. The reaction takes place in the presence of glutamine and ATP through an activated gamma-phospho-Glu-tRNA(Gln). The polypeptide is Glutamyl-tRNA(Gln) amidotransferase subunit A (Latilactobacillus sakei subsp. sakei (strain 23K) (Lactobacillus sakei subsp. sakei)).